The sequence spans 547 residues: Aspartate 1-decarboxylase (547 aa).

Lys-338 is modified (N6-(pyridoxal phosphate)lysine).

Belongs to the group II decarboxylase family. Pyridoxal 5'-phosphate serves as cofactor.

It catalyses the reaction L-aspartate + H(+) = beta-alanine + CO2. The protein operates within cofactor biosynthesis; (R)-pantothenate biosynthesis; beta-alanine from L-aspartate: step 1/1. Its function is as follows. Catalyzes the pyridoxal-dependent decarboxylation of aspartate to produce beta-alanine. Has weak activity with glutamate. In Aliivibrio fischeri (strain ATCC 700601 / ES114) (Vibrio fischeri), this protein is Aspartate 1-decarboxylase.